The sequence spans 208 residues: Putative ribosomal protein uS2-like (208 aa).

The protein belongs to the universal ribosomal protein uS2 family.

It localises to the plastid. Its subcellular location is the chloroplast. This is Putative ribosomal protein uS2-like (rps2-2) from Chlamydomonas reinhardtii (Chlamydomonas smithii).